The chain runs to 165 residues: Shikimate kinase (165 aa).

11 to 16 (GAGKTT) provides a ligand contact to ATP. Residue threonine 15 coordinates Mg(2+). Substrate is bound by residues aspartate 33, arginine 57, and glycine 78. Arginine 116 serves as a coordination point for ATP. Arginine 134 lines the substrate pocket.

The protein belongs to the shikimate kinase family. Monomer. The cofactor is Mg(2+).

It is found in the cytoplasm. It catalyses the reaction shikimate + ATP = 3-phosphoshikimate + ADP + H(+). It functions in the pathway metabolic intermediate biosynthesis; chorismate biosynthesis; chorismate from D-erythrose 4-phosphate and phosphoenolpyruvate: step 5/7. Functionally, catalyzes the specific phosphorylation of the 3-hydroxyl group of shikimic acid using ATP as a cosubstrate. The sequence is that of Shikimate kinase from Bacillus cereus (strain AH187).